The chain runs to 946 residues: Villin-4 (946 aa).

4 Gelsolin-like repeats span residues 28 to 109 (NFKP…ETEK), 152 to 219 (VHVK…EDGK), 274 to 339 (LEHE…TIMF), and 641 to 715 (EIHH…PQFF). Disordered stretches follow at residues 744–783 (ATPS…ERHR) and 846–902 (TKST…PAPD). Residues 765-777 (QDKSQQRTRSMSH) show a composition bias toward polar residues. A compositionally biased stretch (acidic residues) spans 874–883 (SENEPEDDEN). The HP domain maps to 881 to 946 (DENSTIYPYE…NRLKSDLQLF (66 aa)).

It belongs to the villin/gelsolin family.

It localises to the cytoplasm. The protein localises to the cytoskeleton. Functionally, ca(2+)-regulated actin-binding protein. Binds actin microfilaments (MFs). Involved in actin filament bundling, severing and capping. Caps the barbed end of actin filaments and is able to sever them in a calcium-dependent manner. The sequence is that of Villin-4 from Oryza sativa subsp. indica (Rice).